The primary structure comprises 185 residues: Peptidyl-tRNA hydrolase (185 aa).

Phe-12 contacts tRNA. His-17 functions as the Proton acceptor in the catalytic mechanism. The tRNA site is built by Tyr-61, Asn-63, and Asn-109.

The protein belongs to the PTH family. In terms of assembly, monomer.

It localises to the cytoplasm. The enzyme catalyses an N-acyl-L-alpha-aminoacyl-tRNA + H2O = an N-acyl-L-amino acid + a tRNA + H(+). Its function is as follows. Hydrolyzes ribosome-free peptidyl-tRNAs (with 1 or more amino acids incorporated), which drop off the ribosome during protein synthesis, or as a result of ribosome stalling. Catalyzes the release of premature peptidyl moieties from peptidyl-tRNA molecules trapped in stalled 50S ribosomal subunits, and thus maintains levels of free tRNAs and 50S ribosomes. The protein is Peptidyl-tRNA hydrolase of Borrelia garinii subsp. bavariensis (strain ATCC BAA-2496 / DSM 23469 / PBi) (Borreliella bavariensis).